A 206-amino-acid chain; its full sequence is LexA repressor (206 aa).

The segment at residues 28-48 (RAEIARRLGFKSANAAEEHLK) is a DNA-binding region (H-T-H motif). Residues Ser123 and Lys160 each act as for autocatalytic cleavage activity in the active site.

It belongs to the peptidase S24 family. Homodimer.

It carries out the reaction Hydrolysis of Ala-|-Gly bond in repressor LexA.. Its function is as follows. Represses a number of genes involved in the response to DNA damage (SOS response), including recA and lexA. In the presence of single-stranded DNA, RecA interacts with LexA causing an autocatalytic cleavage which disrupts the DNA-binding part of LexA, leading to derepression of the SOS regulon and eventually DNA repair. The protein is LexA repressor of Shewanella halifaxensis (strain HAW-EB4).